The chain runs to 133 residues: Putative esterase STK_17900 (133 aa).

Belongs to the thioesterase PaaI family.

The chain is Putative esterase STK_17900 from Sulfurisphaera tokodaii (strain DSM 16993 / JCM 10545 / NBRC 100140 / 7) (Sulfolobus tokodaii).